A 336-amino-acid polypeptide reads, in one-letter code: Dihydroorotate dehydrogenase (quinone) (336 aa).

FMN contacts are provided by residues 62 to 66 and Thr-86; that span reads AGLDK. Lys-66 contacts substrate. 111–115 is a binding site for substrate; that stretch reads NRMGF. Asn-139 and Asn-172 together coordinate FMN. Asn-172 is a binding site for substrate. Ser-175 functions as the Nucleophile in the catalytic mechanism. Asn-177 is a binding site for substrate. Positions 217 and 245 each coordinate FMN. A substrate-binding site is contributed by 246–247; it reads NT. FMN contacts are provided by residues Gly-268, Gly-297, and 318–319; that span reads YS.

Belongs to the dihydroorotate dehydrogenase family. Type 2 subfamily. Monomer. FMN is required as a cofactor.

It localises to the cell membrane. The catalysed reaction is (S)-dihydroorotate + a quinone = orotate + a quinol. The protein operates within pyrimidine metabolism; UMP biosynthesis via de novo pathway; orotate from (S)-dihydroorotate (quinone route): step 1/1. Catalyzes the conversion of dihydroorotate to orotate with quinone as electron acceptor. The polypeptide is Dihydroorotate dehydrogenase (quinone) (Vibrio vulnificus (strain YJ016)).